A 105-amino-acid chain; its full sequence is U21-theraphotoxin-Cg1a 4 (105 aa).

The first 21 residues, 1 to 21, serve as a signal peptide directing secretion; sequence MKVSVLITLAVLGVMFLLTSA. Residues 22–48 constitute a propeptide that is removed on maturation; it reads EERGSDQMDSPAWLKSMEIIFQSEERE. Disulfide bonds link Cys49–Cys63, Cys56–Cys68, and Cys62–Cys76. A Valine amide modification is found at Val82. Positions 83 to 105 are excised as a propeptide; that stretch reads GKWEMLINMNIFRIVFSYSMCTV.

The protein belongs to the neurotoxin 10 (Hwtx-1) family. 05 (F4a) subfamily. Expressed by the venom gland.

It localises to the secreted. Functionally, probable ion channel inhibitor. The polypeptide is U21-theraphotoxin-Cg1a 4 (Chilobrachys guangxiensis (Chinese earth tiger tarantula)).